The sequence spans 87 residues: Large ribosomal subunit protein bL27 (87 aa).

The span at 1–11 shows a compositional bias: polar residues; it reads MASKASGGSTR. Positions 1–21 are disordered; it reads MASKASGGSTRNGRDSNSKRL.

Belongs to the bacterial ribosomal protein bL27 family.

The polypeptide is Large ribosomal subunit protein bL27 (Hydrogenobaculum sp. (strain Y04AAS1)).